The sequence spans 340 residues: Probable complex I intermediate-associated protein 30, mitochondrial (340 aa).

This sequence belongs to the CIA30 family.

It localises to the mitochondrion. Functionally, chaperone protein involved in the assembly of the mitochondrial NADH:ubiquinone oxidoreductase complex (complex I). Required for normal growth and reproduction. This Caenorhabditis briggsae protein is Probable complex I intermediate-associated protein 30, mitochondrial (nuaf-1).